The following is a 113-amino-acid chain: Class I hydrophobin POH3 (113 aa).

Residues 1–21 (MFSRVIFCTFLILPLLAAATA) form the signal peptide. Disulfide bonds link Cys-32–Cys-92, Cys-39–Cys-86, Cys-40–Cys-73, and Cys-93–Cys-106. Asn-110 carries N-linked (GlcNAc...) asparagine glycosylation.

It belongs to the fungal hydrophobin family. In terms of assembly, self-assembles to form functional amyloid fibrils called rodlets. Self-assembly into fibrillar rodlets occurs spontaneously at hydrophobic:hydrophilic interfaces and the rodlets further associate laterally to form amphipathic monolayers. As to expression, expressionn is switched off in the fruiting bodies but abundantly expressed in the vegetative mycelium of both monokaryon and dikaryon.

It is found in the secreted. Its subcellular location is the cell wall. Its function is as follows. Aerial growth, conidiation, and dispersal of filamentous fungi in the environment rely upon a capability of their secreting small amphipathic proteins called hydrophobins (HPBs) with low sequence identity. Class I can self-assemble into an outermost layer of rodlet bundles on aerial cell surfaces, conferring cellular hydrophobicity that supports fungal growth, development and dispersal; whereas Class II form highly ordered films at water-air interfaces through intermolecular interactions but contribute nothing to the rodlet structure. POH3 is a class I hydrophobin that causes a large drop in the water-surface tension, enabling hyphae to breach the interface and grow into the air, in both the primary and the secondary mycelium. In the latter mycelium POH3 maight also play a role in the emergence of fruiting bodies. Secreted POH3 could also play a role in facilitating lignin degradation. This chain is Class I hydrophobin POH3, found in Pleurotus ostreatus (Oyster mushroom).